The following is a 52-amino-acid chain: Defensin-like protein 2B (52 aa).

4 disulfides stabilise this stretch: Cys-4–Cys-52, Cys-16–Cys-37, Cys-22–Cys-46, and Cys-26–Cys-48.

As to quaternary structure, forms oligomers in its native state.

Functionally, possesses antifungal activity sensitive to inorganic cations. This is Defensin-like protein 2B from Sinapis alba (White mustard).